The sequence spans 348 residues: Mamu class I histocompatibility antigen, alpha chain F (348 aa).

The first 21 residues, 1–21 (MAPRTLLLVLSGALALTETWA), serve as a signal peptide directing secretion. Residues 22-113 (GSHSLRYFST…LLLRYNQSEA (92 aa)) form an alpha-1 region. The Extracellular segment spans residues 22–307 (GSHSLRYFST…ESSSQPTIPI (286 aa)). A glycan (N-linked (GlcNAc...) asparagine) is linked at N109. An alpha-2 region spans residues 114–205 (GSHTLQGMNG…ENGKETLQRA (92 aa)). 2 cysteine pairs are disulfide-bonded: C124–C187 and C226–C282. Residues 206–297 (DPPKAHVAHH…GLPQPLTLRW (92 aa)) form an alpha-3 region. An Ig-like C1-type domain is found at 208–296 (PKAHVAHHPI…EGLPQPLTLR (89 aa)). The segment at 298 to 307 (ESSSQPTIPI) is connecting peptide. The chain crosses the membrane as a helical span at residues 308–331 (VGIVAGLAVLAVVVTGAVVAAVMW). Residues 332 to 348 (RRKSSDRNRGSYSQPTM) are Cytoplasmic-facing.

Belongs to the MHC class I family. As to quaternary structure, heterodimer of an alpha chain and a beta chain (beta-2-microglobulin).

It localises to the membrane. In terms of biological role, involved in the presentation of foreign antigens to the immune system. This chain is Mamu class I histocompatibility antigen, alpha chain F (Mamu-F), found in Macaca mulatta (Rhesus macaque).